The following is a 191-amino-acid chain: Glycerol-3-phosphate acyltransferase (191 aa).

Helical transmembrane passes span 5–25, 50–70, 78–98, 112–132, and 153–173; these read IVFV…ITKI, CIAA…VYIA, SFHM…PVWL, ILIA…LAVF, and SFFF…LIFF.

The protein belongs to the PlsY family. In terms of assembly, probably interacts with PlsX.

The protein localises to the cell membrane. The catalysed reaction is an acyl phosphate + sn-glycerol 3-phosphate = a 1-acyl-sn-glycero-3-phosphate + phosphate. It participates in lipid metabolism; phospholipid metabolism. Functionally, catalyzes the transfer of an acyl group from acyl-phosphate (acyl-PO(4)) to glycerol-3-phosphate (G3P) to form lysophosphatidic acid (LPA). This enzyme utilizes acyl-phosphate as fatty acyl donor, but not acyl-CoA or acyl-ACP. The polypeptide is Glycerol-3-phosphate acyltransferase (Wolbachia sp. subsp. Brugia malayi (strain TRS)).